The primary structure comprises 517 residues: GMP synthase [glutamine-hydrolyzing] (517 aa).

Residues 11 to 202 (KIIVLDYGSQ…AFGVCGAQDN (192 aa)) enclose the Glutamine amidotransferase type-1 domain. Cys-88 (nucleophile) is an active-site residue. Active-site residues include His-176 and Glu-178. One can recognise a GMPS ATP-PPase domain in the interval 203–392 (WTMNDFIDMQ…LGMPYELVWR (190 aa)). Position 230–236 (230–236 (SGGVDSS)) interacts with ATP.

Homodimer.

The enzyme catalyses XMP + L-glutamine + ATP + H2O = GMP + L-glutamate + AMP + diphosphate + 2 H(+). It functions in the pathway purine metabolism; GMP biosynthesis; GMP from XMP (L-Gln route): step 1/1. Catalyzes the synthesis of GMP from XMP. This Latilactobacillus sakei subsp. sakei (strain 23K) (Lactobacillus sakei subsp. sakei) protein is GMP synthase [glutamine-hydrolyzing].